Here is a 504-residue protein sequence, read N- to C-terminus: Phosphoenolpyruvate carboxylase (504 aa).

Over residues 1–16 the composition is skewed to polar residues; the sequence is MTSRKIPSIMGTQHPD. Positions 1-21 are disordered; it reads MTSRKIPSIMGTQHPDNANAP.

This sequence belongs to the PEPCase type 2 family. Homotetramer. Requires Mg(2+) as cofactor.

It catalyses the reaction oxaloacetate + phosphate = phosphoenolpyruvate + hydrogencarbonate. Its function is as follows. Catalyzes the irreversible beta-carboxylation of phosphoenolpyruvate (PEP) to form oxaloacetate (OAA), a four-carbon dicarboxylic acid source for the tricarboxylic acid cycle. In Leuconostoc mesenteroides subsp. mesenteroides (strain ATCC 8293 / DSM 20343 / BCRC 11652 / CCM 1803 / JCM 6124 / NCDO 523 / NBRC 100496 / NCIMB 8023 / NCTC 12954 / NRRL B-1118 / 37Y), this protein is Phosphoenolpyruvate carboxylase.